A 712-amino-acid polypeptide reads, in one-letter code: Polyribonucleotide nucleotidyltransferase (712 aa).

Mg(2+)-binding residues include Asp-487 and Asp-493. A KH domain is found at 554-613 (PRIEVMNIPVDKIREVIGSGGKVIREIVEKTGAKINIEDDGTVKIASSSGKEIEAARKWI). The S1 motif domain maps to 623–691 (GQIYEGTVVK…ERGKVRLSMK (69 aa)).

The protein belongs to the polyribonucleotide nucleotidyltransferase family. It depends on Mg(2+) as a cofactor.

The protein localises to the cytoplasm. The catalysed reaction is RNA(n+1) + phosphate = RNA(n) + a ribonucleoside 5'-diphosphate. Involved in mRNA degradation. Catalyzes the phosphorolysis of single-stranded polyribonucleotides processively in the 3'- to 5'-direction. This Rhizobium leguminosarum bv. trifolii (strain WSM2304) protein is Polyribonucleotide nucleotidyltransferase.